We begin with the raw amino-acid sequence, 784 residues long: LPS-assembly protein LptD (784 aa).

Positions 1 to 24 (MKKRIPTLLATMIATALYSQQGLA) are cleaved as a signal peptide. 2 cysteine pairs are disulfide-bonded: Cys-31-Cys-724 and Cys-173-Cys-725.

The protein belongs to the LptD family. Component of the lipopolysaccharide transport and assembly complex. Interacts with LptE and LptA. Post-translationally, contains two intramolecular disulfide bonds.

The protein localises to the cell outer membrane. Its function is as follows. Together with LptE, is involved in the assembly of lipopolysaccharide (LPS) at the surface of the outer membrane. The polypeptide is LPS-assembly protein LptD (Shigella dysenteriae serotype 1 (strain Sd197)).